The sequence spans 202 residues: LexA repressor (202 aa).

A DNA-binding region (H-T-H motif) is located at residues 28–48 (RAEIAQELGFKSPNAAEEHLK). Active-site for autocatalytic cleavage activity residues include S123 and K160.

It belongs to the peptidase S24 family. As to quaternary structure, homodimer.

It carries out the reaction Hydrolysis of Ala-|-Gly bond in repressor LexA.. In terms of biological role, represses a number of genes involved in the response to DNA damage (SOS response), including recA and lexA. In the presence of single-stranded DNA, RecA interacts with LexA causing an autocatalytic cleavage which disrupts the DNA-binding part of LexA, leading to derepression of the SOS regulon and eventually DNA repair. In Pseudomonas chlororaphis (Pseudomonas aureofaciens), this protein is LexA repressor.